The primary structure comprises 376 residues: Erythronate-4-phosphate dehydrogenase (376 aa).

The substrate site is built by S45 and T67. Residue D147 participates in NAD(+) binding. Residue R209 is part of the active site. NAD(+) is bound at residue D233. The active site involves E238. The active-site Proton donor is the H255. An NAD(+)-binding site is contributed by G258. Y259 is a substrate binding site.

The protein belongs to the D-isomer specific 2-hydroxyacid dehydrogenase family. PdxB subfamily. Homodimer.

The protein resides in the cytoplasm. The catalysed reaction is 4-phospho-D-erythronate + NAD(+) = (R)-3-hydroxy-2-oxo-4-phosphooxybutanoate + NADH + H(+). The protein operates within cofactor biosynthesis; pyridoxine 5'-phosphate biosynthesis; pyridoxine 5'-phosphate from D-erythrose 4-phosphate: step 2/5. Its function is as follows. Catalyzes the oxidation of erythronate-4-phosphate to 3-hydroxy-2-oxo-4-phosphonooxybutanoate. In Shewanella baltica (strain OS195), this protein is Erythronate-4-phosphate dehydrogenase.